A 609-amino-acid polypeptide reads, in one-letter code: (R)-linalool synthase TPS5, chloroplastic (609 aa).

Residues 1-42 constitute a chloroplast transit peptide; that stretch reads MVSILSNIGMMVVTFKRPSLFTSLRRRSANNIIITKHSHPIS. Residues arginine 325, aspartate 362, aspartate 366, arginine 503, and aspartate 506 each coordinate (2E)-geranyl diphosphate. Residues aspartate 362 and aspartate 366 each coordinate Mg(2+). Positions 362–366 match the DDXXD motif motif; sequence DDIYD. Mg(2+)-binding residues include aspartate 506, threonine 510, and glutamate 514.

Belongs to the terpene synthase family. Tpsb subfamily. The cofactor is Mg(2+). Requires Mn(2+) as cofactor. Highly expressed in young fruits and plant tops. Expressed in flower buds and trichomes of petioles and stems. Expressed at low levels in young leaves, stems, petioles, sepals and petals.

The protein localises to the plastid. It localises to the chloroplast. The catalysed reaction is (2E)-geranyl diphosphate + H2O = (R)-linalool + diphosphate. It catalyses the reaction (2E,6E)-farnesyl diphosphate + H2O = (6E)-nerolidol + diphosphate. Its pathway is secondary metabolite biosynthesis; terpenoid biosynthesis. Involved in monoterpene (C10) biosynthesis in glandular trichomes. Converts geranyl diphosphate to linalool in glandular trichomes in response to jasmonate (JA). Can convert farnesyl diphosphate to nerolidol in vitro. The sequence is that of (R)-linalool synthase TPS5, chloroplastic from Solanum lycopersicum (Tomato).